The primary structure comprises 157 residues: ATP synthase subunit b 1 (157 aa).

Residues 7–29 form a helical membrane-spanning segment; it reads LFGQMVTFALLVWFTMKYVWPPL.

Belongs to the ATPase B chain family. F-type ATPases have 2 components, F(1) - the catalytic core - and F(0) - the membrane proton channel. F(1) has five subunits: alpha(3), beta(3), gamma(1), delta(1), epsilon(1). F(0) has three main subunits: a(1), b(2) and c(10-14). The alpha and beta chains form an alternating ring which encloses part of the gamma chain. F(1) is attached to F(0) by a central stalk formed by the gamma and epsilon chains, while a peripheral stalk is formed by the delta and b chains.

The protein localises to the cell inner membrane. Its function is as follows. F(1)F(0) ATP synthase produces ATP from ADP in the presence of a proton or sodium gradient. F-type ATPases consist of two structural domains, F(1) containing the extramembraneous catalytic core and F(0) containing the membrane proton channel, linked together by a central stalk and a peripheral stalk. During catalysis, ATP synthesis in the catalytic domain of F(1) is coupled via a rotary mechanism of the central stalk subunits to proton translocation. Functionally, component of the F(0) channel, it forms part of the peripheral stalk, linking F(1) to F(0). The protein is ATP synthase subunit b 1 of Methylococcus capsulatus (strain ATCC 33009 / NCIMB 11132 / Bath).